Reading from the N-terminus, the 388-residue chain is MLTSVRPADVVLEIDLSAIQANFQTISALVGPQVRVAAVVKSDAYGLGLVKVAGALIDAGCDLLFVGNLHEALLLRSSHISAAVAVFCDEFARYGEHYRSNGLIPVVNNSVELDAICGAREPQAYFLNVETGLSRLGLAFDDVRRRYLGGIFKRRPPSVVLSHLACSERAGDAMNLLQWNRFRATSDLLKPTLLSLAASAGVWLGKRYHFDMVRVGSALYGLNSAGIRPNPLKPVVGVKAKTLDARNVARSEAVGYGATFRTGRASRLAIAGIGYKHGLPWACANKISVRFAGYSAPLVGRVSMEYITIDVTDVPEALCGPGTNVELLSDDFTVDDLAASAGVHPQEVLTRLGVGCARQYLDGSSASAGFPGNLTNAGPGHDPRAILG.

K41 acts as the Proton acceptor; specific for D-alanine in catalysis. K41 carries the N6-(pyridoxal phosphate)lysine modification. Substrate is bound at residue R135. Y256 acts as the Proton acceptor; specific for L-alanine in catalysis. Residue M304 participates in substrate binding.

The protein belongs to the alanine racemase family. Pyridoxal 5'-phosphate is required as a cofactor.

It carries out the reaction L-alanine = D-alanine. The protein operates within amino-acid biosynthesis; D-alanine biosynthesis; D-alanine from L-alanine: step 1/1. Its function is as follows. Catalyzes the interconversion of L-alanine and D-alanine. May also act on other amino acids. This chain is Alanine racemase 3 (alr3), found in Mesorhizobium japonicum (strain LMG 29417 / CECT 9101 / MAFF 303099) (Mesorhizobium loti (strain MAFF 303099)).